Here is a 400-residue protein sequence, read N- to C-terminus: Nicotinate phosphoribosyltransferase (400 aa).

Residue histidine 220 is modified to Phosphohistidine; by autocatalysis.

Belongs to the NAPRTase family. Transiently phosphorylated on a His residue during the reaction cycle. Phosphorylation strongly increases the affinity for substrates and increases the rate of nicotinate D-ribonucleotide production. Dephosphorylation regenerates the low-affinity form of the enzyme, leading to product release.

It catalyses the reaction nicotinate + 5-phospho-alpha-D-ribose 1-diphosphate + ATP + H2O = nicotinate beta-D-ribonucleotide + ADP + phosphate + diphosphate. The protein operates within cofactor biosynthesis; NAD(+) biosynthesis; nicotinate D-ribonucleotide from nicotinate: step 1/1. Catalyzes the synthesis of beta-nicotinate D-ribonucleotide from nicotinate and 5-phospho-D-ribose 1-phosphate at the expense of ATP. This Salmonella typhi protein is Nicotinate phosphoribosyltransferase.